Here is a 146-residue protein sequence, read N- to C-terminus: Putative type II restriction enzyme MjaORF1200P (146 aa).

The protein to A.pernix APE2001.

It catalyses the reaction Endonucleolytic cleavage of DNA to give specific double-stranded fragments with terminal 5'-phosphates.. Its function is as follows. A putative type II restriction enzyme, its methylase would be M.MjaORF1200P (AC Q58600). The sequence is that of Putative type II restriction enzyme MjaORF1200P from Methanocaldococcus jannaschii (strain ATCC 43067 / DSM 2661 / JAL-1 / JCM 10045 / NBRC 100440) (Methanococcus jannaschii).